The sequence spans 295 residues: Ribosomal protein L11 methyltransferase (295 aa).

S-adenosyl-L-methionine-binding residues include Thr-146, Gly-167, Asp-189, and Asn-231.

Belongs to the methyltransferase superfamily. PrmA family.

Its subcellular location is the cytoplasm. The enzyme catalyses L-lysyl-[protein] + 3 S-adenosyl-L-methionine = N(6),N(6),N(6)-trimethyl-L-lysyl-[protein] + 3 S-adenosyl-L-homocysteine + 3 H(+). Its function is as follows. Methylates ribosomal protein L11. In Vibrio parahaemolyticus serotype O3:K6 (strain RIMD 2210633), this protein is Ribosomal protein L11 methyltransferase.